The primary structure comprises 289 residues: Protease HtpX homolog (289 aa).

The next 2 membrane-spanning stretches (helical) occupy residues 9–29 and 31–51; these read TGVL…LIGG and GGMI…YWFS. Residue H133 coordinates Zn(2+). E134 is a catalytic residue. H137 is a binding site for Zn(2+). Helical transmembrane passes span 143–163 and 182–202; these read TLIQ…VDFA and IGLI…QLAI. E207 provides a ligand contact to Zn(2+).

Belongs to the peptidase M48B family. It depends on Zn(2+) as a cofactor.

It localises to the cell membrane. The protein is Protease HtpX homolog of Pyrococcus abyssi (strain GE5 / Orsay).